The primary structure comprises 314 residues: Ribonuclease Z (314 aa).

Zn(2+)-binding residues include histidine 61, histidine 63, aspartate 65, histidine 66, histidine 137, aspartate 207, and histidine 263. The active-site Proton acceptor is aspartate 65.

The protein belongs to the RNase Z family. In terms of assembly, homodimer. The cofactor is Zn(2+).

It catalyses the reaction Endonucleolytic cleavage of RNA, removing extra 3' nucleotides from tRNA precursor, generating 3' termini of tRNAs. A 3'-hydroxy group is left at the tRNA terminus and a 5'-phosphoryl group is left at the trailer molecule.. Zinc phosphodiesterase, which displays some tRNA 3'-processing endonuclease activity. Probably involved in tRNA maturation, by removing a 3'-trailer from precursor tRNA. The polypeptide is Ribonuclease Z (Thermococcus gammatolerans (strain DSM 15229 / JCM 11827 / EJ3)).